Consider the following 161-residue polypeptide: Protein-export protein SecB (161 aa).

This sequence belongs to the SecB family. Homotetramer, a dimer of dimers. One homotetramer interacts with 1 SecA dimer.

It localises to the cytoplasm. In terms of biological role, one of the proteins required for the normal export of preproteins out of the cell cytoplasm. It is a molecular chaperone that binds to a subset of precursor proteins, maintaining them in a translocation-competent state. It also specifically binds to its receptor SecA. In Pseudomonas fluorescens (strain Pf0-1), this protein is Protein-export protein SecB.